Consider the following 515-residue polypeptide: Maturase K (515 aa).

This sequence belongs to the intron maturase 2 family. MatK subfamily.

Its subcellular location is the plastid. The protein resides in the chloroplast. Its function is as follows. Usually encoded in the trnK tRNA gene intron. Probably assists in splicing its own and other chloroplast group II introns. This chain is Maturase K, found in Sorghum bicolor (Sorghum).